A 321-amino-acid polypeptide reads, in one-letter code: Olfactory receptor 52N4 (321 aa).

At 1 to 27 (MLTLNKTDLIPASFILNGVPGLEDTQL) the chain is on the extracellular side. A glycan (N-linked (GlcNAc...) asparagine) is linked at Asn-5. Residues 28–48 (WISFPFCSMYVVAMVGNCGLL) form a helical membrane-spanning segment. Residues 49-56 (YLIHYEDA) are Cytoplasmic-facing. A helical membrane pass occupies residues 57–77 (LHKPMYYFLAMLSFTDLVMCS). At 78–101 (STIPKALCIFWFHLKDIGFDECLV) the chain is on the extracellular side. Cys-99 and Cys-191 are joined by a disulfide. Residues 102-122 (QMFFTHTFTGMESGVLMLMAL) traverse the membrane as a helical segment. The Cytoplasmic portion of the chain corresponds to 123 to 141 (DRYVAICYPLRYSTILTNP). A helical transmembrane segment spans residues 142 to 162 (VIAKVGTATFLRGVLLIIPFT). The Extracellular portion of the chain corresponds to 163-198 (FLTKLLPYCRGNILPHTYCDHMSVAKLSCGNVKVNA). Residues 199-219 (IYGLMVALLIWGFDILCITNS) form a helical membrane-spanning segment. Topologically, residues 220–239 (YTMILRAVVSLSSADARQKA) are cytoplasmic. A helical membrane pass occupies residues 240-260 (FNTCTAHICAIVFSYTPAFFS). Topologically, residues 261-276 (FFSHRFGEHIIPPSCH) are extracellular. Residues 277–297 (IIVANIYLLLPPTMNPIVYGV) form a helical membrane-spanning segment. Topologically, residues 298–321 (KTKQIRDCVIRILSGSKDTKSYSM) are cytoplasmic.

The protein belongs to the G-protein coupled receptor 1 family.

The protein resides in the cell membrane. Functionally, odorant receptor. This is Olfactory receptor 52N4 (OR52N4) from Homo sapiens (Human).